The sequence spans 342 residues: uncharacterized protein (342 aa).

7 residues coordinate Zn(2+): cysteine 41, histidine 63, cysteine 94, cysteine 97, cysteine 100, cysteine 108, and glutamate 149.

It belongs to the zinc-containing alcohol dehydrogenase family. Zn(2+) is required as a cofactor.

This is an uncharacterized protein from Haemophilus influenzae (strain ATCC 51907 / DSM 11121 / KW20 / Rd).